Here is a 428-residue protein sequence, read N- to C-terminus: MSNNTTIPSKTATDICLTDRQMSLSVSSTEGVLIGTIIPILVLFGISGNILNLTVLLAPNLRTRSNQLLACLAVADIVSLVVILPHSMAHYETFETALWFRKFYGKYKFQIIAMTNWSIATATWLVFVICLERLIIIKYPLSVRKQAKFFTPRNVVTIIVVTTFILTSYNHVSHACAEKLFCNGTQYHVACLGIDSERWFRNEPNPNSEFMKSVVRVAPQVNAIFVVLIPVVLVIIFNVMLILTLRQRTKLFEPSKTIRGDSQFTQLQSKTEHKVTITVTAIVTCFTITQSPSAFVTFLSSYVHRDWVTLSAICTILVVLGKALNFVLFCLSSASFRQRLLMQTKQGILRKSTRTVSMVTSSTVVVDSLPESRKKSRVAMEMIERRTSASSCLVGGNRADRTHRANSSQSMIGERMPLKEFRRGTSFV.

Residues 1–30 (MSNNTTIPSKTATDICLTDRQMSLSVSSTE) are Extracellular-facing. 2 N-linked (GlcNAc...) asparagine glycosylation sites follow: asparagine 3 and asparagine 4. Residues 31-51 (GVLIGTIIPILVLFGISGNIL) traverse the membrane as a helical segment. The Cytoplasmic portion of the chain corresponds to 52-67 (NLTVLLAPNLRTRSNQ). The chain crosses the membrane as a helical span at residues 68–88 (LLACLAVADIVSLVVILPHSM). Over 89-110 (AHYETFETALWFRKFYGKYKFQ) the chain is Extracellular. A helical membrane pass occupies residues 111-131 (IIAMTNWSIATATWLVFVICL). The Cytoplasmic portion of the chain corresponds to 132–154 (ERLIIIKYPLSVRKQAKFFTPRN). The chain crosses the membrane as a helical span at residues 155–175 (VVTIIVVTTFILTSYNHVSHA). Residues 176–222 (CAEKLFCNGTQYHVACLGIDSERWFRNEPNPNSEFMKSVVRVAPQVN) lie on the Extracellular side of the membrane. N-linked (GlcNAc...) asparagine glycosylation occurs at asparagine 183. The helical transmembrane segment at 223–243 (AIFVVLIPVVLVIIFNVMLIL) threads the bilayer. The Cytoplasmic segment spans residues 244–278 (TLRQRTKLFEPSKTIRGDSQFTQLQSKTEHKVTIT). Residues 279 to 299 (VTAIVTCFTITQSPSAFVTFL) form a helical membrane-spanning segment. Topologically, residues 300–309 (SSYVHRDWVT) are extracellular. The helical transmembrane segment at 310–330 (LSAICTILVVLGKALNFVLFC) threads the bilayer. Topologically, residues 331–428 (LSSASFRQRL…KEFRRGTSFV (98 aa)) are cytoplasmic.

It belongs to the G-protein coupled receptor 1 family.

The protein localises to the cell membrane. The sequence is that of Putative G-protein coupled receptor F59B2.13 from Caenorhabditis elegans.